The primary structure comprises 377 residues: MSAVLDLVRDLIARPSVTPQDKDCQQMLAQRLARIGFQCETIARGGVTNLWARRGTQGPLVVFAGHTDVVPPGPREKWDSDPFVPTERDGYLYGRGASDMKSSIAAFVVAVEEFVAAHPQHEGSLAFLLTSDEEGPAIDGTVIVCDALQARGEKLDYCIVGEPTSTHELGDVCKNGRRGSLGGTLTVKGIQGHVAYPHLARNPVHQFAPALAELVGIEWDKGNEYFPPTTFQISNLNSGTGATNVVPAEAIVEFNCRFSTASTPESLKARVHEVLDRHGLEYDLEWDLGGEPFLTARGSLTDALSSAIQAETGLTPELSTTGGTSDGRFIAKICPQVIEFGPTNATIHKINERVALDCLDPLKNIYRRTLENLLLAH.

Histidine 66 lines the Zn(2+) pocket. Aspartate 68 is a catalytic residue. Aspartate 99 is a binding site for Zn(2+). Glutamate 133 acts as the Proton acceptor in catalysis. Residues glutamate 134, glutamate 162, and histidine 348 each contribute to the Zn(2+) site.

It belongs to the peptidase M20A family. DapE subfamily. As to quaternary structure, homodimer. Zn(2+) is required as a cofactor. Requires Co(2+) as cofactor.

The catalysed reaction is N-succinyl-(2S,6S)-2,6-diaminopimelate + H2O = (2S,6S)-2,6-diaminopimelate + succinate. It participates in amino-acid biosynthesis; L-lysine biosynthesis via DAP pathway; LL-2,6-diaminopimelate from (S)-tetrahydrodipicolinate (succinylase route): step 3/3. Its function is as follows. Catalyzes the hydrolysis of N-succinyl-L,L-diaminopimelic acid (SDAP), forming succinate and LL-2,6-diaminopimelate (DAP), an intermediate involved in the bacterial biosynthesis of lysine and meso-diaminopimelic acid, an essential component of bacterial cell walls. In Bordetella avium (strain 197N), this protein is Succinyl-diaminopimelate desuccinylase.